The following is a 281-amino-acid chain: NAC domain-containing protein 6 (281 aa).

The 153-residue stretch at 4–156 (LPVGSRFCPT…QDALTGFADQ (153 aa)) folds into the NAC domain. Disordered regions lie at residues 84–109 (GGSE…QKGD) and 211–249 (LEGH…VTQE). Residues 94-109 (NDGKKEIKDGHMQKGD) are compositionally biased toward basic and acidic residues. The DNA-binding element occupies 109–162 (DGLRASDDLQKVVLCRIRYKKEANVNEFGLVNHQAHQTQDALTGFADQLEMMLE). Over residues 229 to 239 (QQQQQQQQQQQ) the composition is skewed to low complexity.

It is found in the nucleus. The polypeptide is NAC domain-containing protein 6 (NAC006) (Arabidopsis thaliana (Mouse-ear cress)).